Reading from the N-terminus, the 60-residue chain is Large ribosomal subunit protein bL32 (60 aa).

The tract at residues 1–60 is disordered; the sequence is MAVQQNKKSRSARDMRRSHDALEPNALSVEKSTGEVHLRHHVSPDGFYRGRKVIDKGADE. The segment covering 11 to 22 has biased composition (basic and acidic residues); sequence SARDMRRSHDAL.

This sequence belongs to the bacterial ribosomal protein bL32 family.

The protein is Large ribosomal subunit protein bL32 of Stutzerimonas stutzeri (strain A1501) (Pseudomonas stutzeri).